Consider the following 388-residue polypeptide: Succinate--CoA ligase [ADP-forming] subunit beta (388 aa).

The region spanning 9 to 244 is the ATP-grasp domain; it reads KQIFAKYKLP…PSQDDPREAL (236 aa). ATP-binding positions include Lys46, 53 to 55, Glu99, Ala102, and Glu107; that span reads GRG. Mg(2+) is bound by residues Asn199 and Asp213. Residues Asn264 and 321–323 contribute to the substrate site; that span reads GIV.

The protein belongs to the succinate/malate CoA ligase beta subunit family. Heterotetramer of two alpha and two beta subunits. Mg(2+) serves as cofactor.

It catalyses the reaction succinate + ATP + CoA = succinyl-CoA + ADP + phosphate. It carries out the reaction GTP + succinate + CoA = succinyl-CoA + GDP + phosphate. Its pathway is carbohydrate metabolism; tricarboxylic acid cycle; succinate from succinyl-CoA (ligase route): step 1/1. In terms of biological role, succinyl-CoA synthetase functions in the citric acid cycle (TCA), coupling the hydrolysis of succinyl-CoA to the synthesis of either ATP or GTP and thus represents the only step of substrate-level phosphorylation in the TCA. The beta subunit provides nucleotide specificity of the enzyme and binds the substrate succinate, while the binding sites for coenzyme A and phosphate are found in the alpha subunit. The polypeptide is Succinate--CoA ligase [ADP-forming] subunit beta (Glaesserella parasuis serovar 5 (strain SH0165) (Haemophilus parasuis)).